We begin with the raw amino-acid sequence, 827 residues long: Periplasmic nitrate reductase (827 aa).

A signal peptide (tat-type signal) is located at residues 1 to 32 (MTLSRRAFIKQTAAATAASAAGVVLPGVDALA). Residues 37-93 (LTWSKAPCRFCGTGCGVSVGVKNGKVVATQGDPQAEVNRGLNCVKGYFLSKIMYGQD) enclose the 4Fe-4S Mo/W bis-MGD-type domain. Positions 44, 47, 51, and 79 each coordinate [4Fe-4S] cluster. Residues Lys-81, Gln-148, Asn-173, Cys-177, 241-245 (STFEH), 260-262 (QSD), Met-371, Gln-375, Asn-481, 507-508 (SD), Lys-530, Asp-557, and 717-726 (TGRVLEHWHS) contribute to the Mo-bis(molybdopterin guanine dinucleotide) site. Trp-793 serves as a coordination point for substrate. Mo-bis(molybdopterin guanine dinucleotide) contacts are provided by Asn-801 and Lys-818.

Belongs to the prokaryotic molybdopterin-containing oxidoreductase family. NasA/NapA/NarB subfamily. Component of the periplasmic nitrate reductase NapAB complex composed of NapA and NapB. [4Fe-4S] cluster serves as cofactor. It depends on Mo-bis(molybdopterin guanine dinucleotide) as a cofactor. Predicted to be exported by the Tat system. The position of the signal peptide cleavage has not been experimentally proven.

It is found in the periplasm. It carries out the reaction 2 Fe(II)-[cytochrome] + nitrate + 2 H(+) = 2 Fe(III)-[cytochrome] + nitrite + H2O. In terms of biological role, catalytic subunit of the periplasmic nitrate reductase complex NapAB. Receives electrons from NapB and catalyzes the reduction of nitrate to nitrite. The sequence is that of Periplasmic nitrate reductase from Paraburkholderia xenovorans (strain LB400).